The sequence spans 251 residues: Large ribosomal subunit protein uL2 (251 aa).

Residues 1–12 (MGKRLRVQRHGR) show a composition bias toward basic residues. The interval 1–22 (MGKRLRVQRHGRGTPQWRNRGH) is disordered.

It belongs to the universal ribosomal protein uL2 family. In terms of assembly, part of the 50S ribosomal subunit. Forms a bridge to the 30S subunit in the 70S ribosome.

Functionally, one of the primary rRNA binding proteins. Required for association of the 30S and 50S subunits to form the 70S ribosome, for tRNA binding and peptide bond formation. It has been suggested to have peptidyltransferase activity; this is somewhat controversial. Makes several contacts with the 16S rRNA in the 70S ribosome. The chain is Large ribosomal subunit protein uL2 from Ignicoccus hospitalis (strain KIN4/I / DSM 18386 / JCM 14125).